A 385-amino-acid chain; its full sequence is NADH-quinone oxidoreductase subunit D 2 (385 aa).

Belongs to the complex I 49 kDa subunit family. NDH-1 is composed of 14 different subunits. Subunits NuoB, C, D, E, F, and G constitute the peripheral sector of the complex.

Its subcellular location is the cell membrane. The catalysed reaction is a quinone + NADH + 5 H(+)(in) = a quinol + NAD(+) + 4 H(+)(out). In terms of biological role, NDH-1 shuttles electrons from NADH, via FMN and iron-sulfur (Fe-S) centers, to quinones in the respiratory chain. The immediate electron acceptor for the enzyme in this species is believed to be a menaquinone. Couples the redox reaction to proton translocation (for every two electrons transferred, four hydrogen ions are translocated across the cytoplasmic membrane), and thus conserves the redox energy in a proton gradient. The polypeptide is NADH-quinone oxidoreductase subunit D 2 (Salinispora arenicola (strain CNS-205)).